We begin with the raw amino-acid sequence, 546 residues long: Chaperonin GroEL (546 aa).

Residues 30-33 (TLGP), lysine 51, 87-91 (DGTTT), glycine 415, and aspartate 496 contribute to the ATP site. The segment at 527–546 (EKKAPAGAPGGMGGMGDMDF) is disordered. Gly residues predominate over residues 534-546 (APGGMGGMGDMDF).

Belongs to the chaperonin (HSP60) family. Forms a cylinder of 14 subunits composed of two heptameric rings stacked back-to-back. Interacts with the co-chaperonin GroES.

Its subcellular location is the cytoplasm. It catalyses the reaction ATP + H2O + a folded polypeptide = ADP + phosphate + an unfolded polypeptide.. Functionally, together with its co-chaperonin GroES, plays an essential role in assisting protein folding. The GroEL-GroES system forms a nano-cage that allows encapsulation of the non-native substrate proteins and provides a physical environment optimized to promote and accelerate protein folding. This chain is Chaperonin GroEL, found in Rhodospirillum centenum (strain ATCC 51521 / SW).